The following is a 155-amino-acid chain: Endoribonuclease YbeY (155 aa).

Zn(2+) contacts are provided by His116, His120, and His126.

Belongs to the endoribonuclease YbeY family. Zn(2+) serves as cofactor.

It localises to the cytoplasm. Functionally, single strand-specific metallo-endoribonuclease involved in late-stage 70S ribosome quality control and in maturation of the 3' terminus of the 16S rRNA. This is Endoribonuclease YbeY from Thermobifida fusca (strain YX).